Here is a 339-residue protein sequence, read N- to C-terminus: Phenylalanine--tRNA ligase alpha subunit (339 aa).

Mg(2+) is bound at residue Glu-250.

Belongs to the class-II aminoacyl-tRNA synthetase family. Phe-tRNA synthetase alpha subunit type 1 subfamily. Tetramer of two alpha and two beta subunits. Mg(2+) serves as cofactor.

The protein localises to the cytoplasm. It catalyses the reaction tRNA(Phe) + L-phenylalanine + ATP = L-phenylalanyl-tRNA(Phe) + AMP + diphosphate + H(+). The protein is Phenylalanine--tRNA ligase alpha subunit of Flavobacterium psychrophilum (strain ATCC 49511 / DSM 21280 / CIP 103535 / JIP02/86).